The primary structure comprises 333 residues: (2R)-3-sulfolactate dehydrogenase (NADP(+)) (333 aa).

The protein belongs to the LDH2/MDH2 oxidoreductase family.

The enzyme catalyses (2R)-3-sulfolactate + NADP(+) = 3-sulfopyruvate + NADPH + H(+). Catalyzes the reduction of sulfopyruvate to (R)-sulfolactate. Together with SlcC, provides a racemase system that converts (2S)-3-sulfolactate to (2R)-3-sulfolactate, which is degraded further by (2R)-sulfolactate sulfo-lyase. The protein is (2R)-3-sulfolactate dehydrogenase (NADP(+)) (comC) of Chromohalobacter salexigens (strain ATCC BAA-138 / DSM 3043 / CIP 106854 / NCIMB 13768 / 1H11).